A 261-amino-acid polypeptide reads, in one-letter code: Lysosomal-associated transmembrane protein 5 (261 aa).

The next 5 helical transmembrane spans lie at 21 to 41 (TIAL…EHVV), 65 to 85 (SSFL…FGVV), 92 to 112 (LIPF…TLLG), 133 to 153 (VPLM…LCSS), and 183 to 203 (FINM…LKVY). A disordered region spans residues 242–261 (LSLPPKTPEGDPAPPPYSEV). Residues 246–261 (PKTPEGDPAPPPYSEV) show a composition bias toward pro residues. Phosphotyrosine is present on tyrosine 258.

Belongs to the LAPTM4/LAPTM5 transporter family. In terms of assembly, binds to ubiquitin. As to expression, preferentially expressed in adult hematopoietic tissues. High levels in lymphoid and myeloid tissues.

The protein resides in the lysosome membrane. Its function is as follows. May have a special functional role during embryogenesis and in adult hematopoietic cells. The protein is Lysosomal-associated transmembrane protein 5 (Laptm5) of Mus musculus (Mouse).